The sequence spans 104 residues: Thioredoxin 1 (104 aa).

Positions 2-104 (VKIVTSQAEF…LKQLIEKYAA (103 aa)) constitute a Thioredoxin domain. Residues Cys-30 and Cys-33 each act as nucleophile in the active site. Cys-30 and Cys-33 are disulfide-bonded.

It belongs to the thioredoxin family. In terms of processing, the disulfide bond between Cys-30 and Cys-33 acts as a redox-active center and is reduced by thioredoxin reductase TRXR.

Its subcellular location is the cytoplasm. Functionally, participates in various redox reactions through the reversible oxidation of its active center dithiol to a disulfide and catalyzes dithiol-disulfide exchange reactions. By modifying the redox status of targeted proteins, induces changes in their structure and activity. Reduces oxidized glutathione (GSSG), thereby acting as a backup for the glutathione redox system. Reduces nitroglutathione (GSNO), a compound involved in the transport of nitric oxide (NO). Also reduces oxidative stress by detoxifying hydrogen peroxide, tert-butyl hydroperoxide and cumene hydroperoxide. Activates ornithine aminotransferase OAT by reducing a disulfide bond in the substrate binding loop, thereby enhancing the affinity of OAT for its substrates. May reduce S-adenosyl-L-homocysteine hydrolase SAHH. This chain is Thioredoxin 1, found in Plasmodium falciparum (isolate 3D7).